A 143-amino-acid polypeptide reads, in one-letter code: D-aminoacyl-tRNA deacylase (143 aa).

The Gly-cisPro motif, important for rejection of L-amino acids signature appears at 135–136 (GP).

The protein belongs to the DTD family. In terms of assembly, homodimer.

It localises to the cytoplasm. It catalyses the reaction glycyl-tRNA(Ala) + H2O = tRNA(Ala) + glycine + H(+). The enzyme catalyses a D-aminoacyl-tRNA + H2O = a tRNA + a D-alpha-amino acid + H(+). An aminoacyl-tRNA editing enzyme that deacylates mischarged D-aminoacyl-tRNAs. Also deacylates mischarged glycyl-tRNA(Ala), protecting cells against glycine mischarging by AlaRS. Acts via tRNA-based rather than protein-based catalysis; rejects L-amino acids rather than detecting D-amino acids in the active site. By recycling D-aminoacyl-tRNA to D-amino acids and free tRNA molecules, this enzyme counteracts the toxicity associated with the formation of D-aminoacyl-tRNA entities in vivo and helps enforce protein L-homochirality. The polypeptide is D-aminoacyl-tRNA deacylase (Mycolicibacterium paratuberculosis (strain ATCC BAA-968 / K-10) (Mycobacterium paratuberculosis)).